The primary structure comprises 265 residues: Gamma-secretase subunit APH-1A (265 aa).

Residues methionine 1 to glycine 2 are Lumenal-facing. Residues alanine 3–isoleucine 23 traverse the membrane as a helical segment. Residues threonine 24–arginine 31 lie on the Cytoplasmic side of the membrane. The chain crosses the membrane as a helical span at residues valine 32–valine 52. Residues tryptophan 53–glutamine 68 lie on the Lumenal side of the membrane. Residues tyrosine 69 to alanine 89 form a helical membrane-spanning segment. The Cytoplasmic segment spans residues tyrosine 90–alanine 118. The chain crosses the membrane as a helical span at residues tyrosine 119 to alanine 139. At aspartate 140 to leucine 158 the chain is on the lumenal side. The chain crosses the membrane as a helical span at residues threonine 159–phenylalanine 179. The Cytoplasmic segment spans residues aspartate 180–arginine 186. Residues tyrosine 187–asparagine 207 form a helical membrane-spanning segment. The Lumenal segment spans residues proline 208–serine 213. A helical transmembrane segment spans residues leucine 214–glycine 234. Residues serine 235–aspartate 265 are Cytoplasmic-facing.

It belongs to the APH-1 family. As to quaternary structure, the functional gamma-secretase complex is composed of at least four polypeptides: a presenilin homodimer (PSEN1 or PSEN2), nicastrin (NCSTN), APH1 (APH1A or APH1B) and PSENEN/PEN2. Widely expressed. Expressed in leukocytes, lung, placenta, small intestine, liver, kidney, spleen thymus, skeletal muscle, heart and brain. Isoform 1 and isoform 2 are nearly expressed at the same level.

It is found in the endoplasmic reticulum membrane. The protein resides in the golgi apparatus. The protein localises to the golgi stack membrane. Functionally, non-catalytic subunit of the gamma-secretase complex, an endoprotease complex that catalyzes the intramembrane cleavage of integral membrane proteins such as Notch receptors and APP (amyloid-beta precursor protein). Required for normal gamma-secretase assembly. The gamma-secretase complex plays a role in Notch and Wnt signaling cascades and regulation of downstream processes via its role in processing key regulatory proteins, and by regulating cytosolic CTNNB1 levels. The polypeptide is Gamma-secretase subunit APH-1A (APH1A) (Homo sapiens (Human)).